The chain runs to 131 residues: Holo-[acyl-carrier-protein] synthase (131 aa).

Mg(2+)-binding residues include Asp8 and Glu59.

It belongs to the P-Pant transferase superfamily. AcpS family. Mg(2+) serves as cofactor.

It localises to the cytoplasm. It catalyses the reaction apo-[ACP] + CoA = holo-[ACP] + adenosine 3',5'-bisphosphate + H(+). Functionally, transfers the 4'-phosphopantetheine moiety from coenzyme A to a Ser of acyl-carrier-protein. The chain is Holo-[acyl-carrier-protein] synthase from Rickettsia massiliae (strain Mtu5).